A 919-amino-acid chain; its full sequence is 2-oxoadipate dehydrogenase complex component E1 (919 aa).

N6-succinyllysine occurs at positions 183 and 188. Positions G299 to Q320 are disordered. An N6-succinyllysine mark is found at K800 and K818.

It belongs to the alpha-ketoglutarate dehydrogenase family. The 2-oxoadipate dehydrogenase complex is composed of OADH (2-oxoadipate dehydrogenase; E1a), DLST (dihydrolipoamide succinyltransferase; E2) and DLD (dihydrolipoamide dehydrogenase; E3). E1a functional unit is a dimer. Interacts with DLST. Requires thiamine diphosphate as cofactor.

Its subcellular location is the mitochondrion. It carries out the reaction N(6)-[(R)-lipoyl]-L-lysyl-[protein] + 2-oxoadipate + H(+) = N(6)-[(R)-S(8)-glutaryldihydrolipoyl]-L-lysyl-[protein] + CO2. It functions in the pathway amino-acid degradation. Functionally, 2-oxoadipate dehydrogenase (E1a) component of the 2-oxoadipate dehydrogenase complex (OADHC). Participates in the first step, rate limiting for the overall conversion of 2-oxoadipate (alpha-ketoadipate) to glutaryl-CoA and CO(2) catalyzed by the whole OADHC. Catalyzes the irreversible decarboxylation of 2-oxoadipate via the thiamine diphosphate (ThDP) cofactor and subsequent transfer of the decarboxylated acyl intermediate on an oxidized dihydrolipoyl group that is covalently amidated to the E2 enzyme (dihydrolipoyllysine-residue succinyltransferase or DLST). Can catalyze the decarboxylation of 2-oxoglutarate in vitro, but at a much lower rate than 2-oxoadipate. Responsible for the last step of L-lysine, L-hydroxylysine and L-tryptophan catabolism with the common product being 2-oxoadipate. In Homo sapiens (Human), this protein is 2-oxoadipate dehydrogenase complex component E1 (DHTKD1).